A 327-amino-acid polypeptide reads, in one-letter code: Phenylalanine--tRNA ligase alpha subunit (327 aa).

Glutamate 252 contacts Mg(2+).

The protein belongs to the class-II aminoacyl-tRNA synthetase family. Phe-tRNA synthetase alpha subunit type 1 subfamily. Tetramer of two alpha and two beta subunits. Mg(2+) serves as cofactor.

It localises to the cytoplasm. It carries out the reaction tRNA(Phe) + L-phenylalanine + ATP = L-phenylalanyl-tRNA(Phe) + AMP + diphosphate + H(+). The chain is Phenylalanine--tRNA ligase alpha subunit from Shigella boydii serotype 18 (strain CDC 3083-94 / BS512).